Consider the following 541-residue polypeptide: L-ornithine N(5)-monooxygenase (541 aa).

Residues 50-58 (EKQPEFQWH) and Gln-69 contribute to the FAD site. Lys-74 lines the substrate pocket. NADP(+) is bound at residue 223 to 226 (SGQS). Residues 269–272 (NEIF) and Asn-300 each bind substrate. An NADP(+)-binding site is contributed by 300 to 302 (NYS). The segment at 430-474 (TEIPKGPDGSLFDASEEEATWRPASPITPASPSPPSTPTSSALSQ) is disordered. Residue 520-522 (SLL) participates in FAD binding. Ser-523 serves as a coordination point for substrate.

Belongs to the lysine N(6)-hydroxylase/L-ornithine N(5)-oxygenase family. As to quaternary structure, homotetramer. It depends on FAD as a cofactor.

It carries out the reaction L-ornithine + NADPH + O2 = N(5)-hydroxy-L-ornithine + NADP(+) + H2O. It catalyses the reaction L-ornithine + NADH + O2 = N(5)-hydroxy-L-ornithine + NAD(+) + H2O. It participates in siderophore biosynthesis. In terms of biological role, L-ornithine N(5)-monooxygenase; part of the siderophore basidioferrin biosynthetic pathway. The biosynthesis of basidioferrin depends on the hydroxylation of ornithine to N(5)-hydroxyornithine, catalyzed by the monooxygenase SMO1. The second step, the acylation of N(5)-hydroxy-L-ornithine is catalyzed by a not yet identified N-acyltransferase. Finally, assembly of basidioferrin is catalyzed by the nonribosomal peptide synthase (NRPS) NPS2 via amide bond formation between three L-AHO molecules to release the linear L-AHO trimer. This chain is L-ornithine N(5)-monooxygenase (SMO1), found in Ceriporiopsis subvermispora (strain B) (White-rot fungus).